The following is a 374-amino-acid chain: MESLLQHLDRFSELLAVSSTTYVSTWDPATVRRALQWARYLRHIHRRFGRHGPIRTALERRLHNQWRQEGGFGRGPVPGLANFQALGHCDVLLSLRLLENRALGDAARYHLVQQLFPGPGVRDADEETLQESLARLARRRSAVHMLRFNGYRENPNLQEDSLMKTQAELLLERLQEVGKAEAERPARFLSSLWERLPQNNFLKVIAVALLQPPLSRRPQEELEPGIHKSPGEGSQVLVHWLLGNSEVFAAFCRALPAGLLTLVTSRHPALSPVYLGLLTDWGQRLHYDLQKGIWVGTESQDVPWEELHNRFQSLCQAPPPLKDKVLTALETCKAQDGDFEVPGLSIWTDLLLALRSGAFRKRQVLGLSAGLSSV.

As to quaternary structure, belongs to the multisubunit FA complex composed of FANCA, FANCB, FANCC, FANCE, FANCF, FANCG, FANCL/PHF9 and FANCM. The complex is not found in FA patients. In complex with FANCA, FANCG and FANCL, but not with FANCC, nor FANCE, interacts with HES1; this interaction may be essential for the stability and nuclear localization of FA core complex proteins.

The protein resides in the nucleus. DNA repair protein that may operate in a postreplication repair or a cell cycle checkpoint function. May be implicated in interstrand DNA cross-link repair and in the maintenance of normal chromosome stability. The protein is Fanconi anemia group F protein (FANCF) of Homo sapiens (Human).